We begin with the raw amino-acid sequence, 183 residues long: MSRKARDPIVLPQGVEVSIQNNEILVKGPKGSLKQVLAPEVVIDIKGREVFVHPAPYVVDRPSRMQGLFWALISNMVQGVSVGFEKRLEMIGVGFRASVQGSILDLSIGVSHPTKIPIPADIQVSVEKNTIISVKGINKQLVGEFAANIRAKRKPEPYKGKGIRYENEYVRRKAGKAAKTGKK.

Belongs to the universal ribosomal protein uL6 family. As to quaternary structure, part of the 50S ribosomal subunit.

This protein binds to the 23S rRNA, and is important in its secondary structure. It is located near the subunit interface in the base of the L7/L12 stalk, and near the tRNA binding site of the peptidyltransferase center. This Chlamydia abortus (strain DSM 27085 / S26/3) (Chlamydophila abortus) protein is Large ribosomal subunit protein uL6.